A 61-amino-acid polypeptide reads, in one-letter code: Large ribosomal subunit protein bL32 (61 aa).

This sequence belongs to the bacterial ribosomal protein bL32 family.

In Hyphomonas neptunium (strain ATCC 15444), this protein is Large ribosomal subunit protein bL32.